A 141-amino-acid polypeptide reads, in one-letter code: Large-conductance mechanosensitive channel (141 aa).

3 helical membrane-spanning segments follow: residues 14–34 (VVDL…VNSL), 38–58 (VIMP…YYIP), and 82–102 (GQFL…FMVI).

The protein belongs to the MscL family. In terms of assembly, homopentamer.

Its subcellular location is the cell inner membrane. Functionally, channel that opens in response to stretch forces in the membrane lipid bilayer. May participate in the regulation of osmotic pressure changes within the cell. This chain is Large-conductance mechanosensitive channel, found in Methylorubrum extorquens (strain CM4 / NCIMB 13688) (Methylobacterium extorquens).